Here is a 117-residue protein sequence, read N- to C-terminus: Ribonuclease P protein component (117 aa).

Belongs to the RnpA family. As to quaternary structure, consists of a catalytic RNA component (M1 or rnpB) and a protein subunit.

It catalyses the reaction Endonucleolytic cleavage of RNA, removing 5'-extranucleotides from tRNA precursor.. In terms of biological role, RNaseP catalyzes the removal of the 5'-leader sequence from pre-tRNA to produce the mature 5'-terminus. It can also cleave other RNA substrates such as 4.5S RNA. The protein component plays an auxiliary but essential role in vivo by binding to the 5'-leader sequence and broadening the substrate specificity of the ribozyme. The polypeptide is Ribonuclease P protein component (Staphylococcus aureus (strain bovine RF122 / ET3-1)).